We begin with the raw amino-acid sequence, 263 residues long: Endonuclease 8 (263 aa).

Proline 2 functions as the Schiff-base intermediate with DNA in the catalytic mechanism. Glutamate 3 functions as the Proton donor in the catalytic mechanism. Lysine 53 (proton donor; for beta-elimination activity) is an active-site residue. Residues glutamine 70, arginine 125, and asparagine 169 each coordinate DNA. An FPG-type zinc finger spans residues 229 to 263; it reads KVFHRDGEPCERCGGIIEKTTLSSRPFYWCPGCQH. The active-site Proton donor; for delta-elimination activity is the arginine 253.

Belongs to the FPG family. Zn(2+) is required as a cofactor.

The enzyme catalyses 2'-deoxyribonucleotide-(2'-deoxyribose 5'-phosphate)-2'-deoxyribonucleotide-DNA = a 3'-end 2'-deoxyribonucleotide-(2,3-dehydro-2,3-deoxyribose 5'-phosphate)-DNA + a 5'-end 5'-phospho-2'-deoxyribonucleoside-DNA + H(+). Its function is as follows. Involved in base excision repair of DNA damaged by oxidation or by mutagenic agents. Acts as a DNA glycosylase that recognizes and removes damaged bases. Has a preference for oxidized pyrimidines, such as thymine glycol, 5,6-dihydrouracil and 5,6-dihydrothymine. Has AP (apurinic/apyrimidinic) lyase activity and introduces nicks in the DNA strand. Cleaves the DNA backbone by beta-delta elimination to generate a single-strand break at the site of the removed base with both 3'- and 5'-phosphates. This chain is Endonuclease 8, found in Escherichia coli O6:K15:H31 (strain 536 / UPEC).